Reading from the N-terminus, the 308-residue chain is UPF0282 protein M164_2122 (308 aa).

This sequence belongs to the UPF0282 family.

This is UPF0282 protein M164_2122 from Saccharolobus islandicus (strain M.16.4 / Kamchatka #3) (Sulfolobus islandicus).